The sequence spans 395 residues: ETS-related transcription factor Elf-3 (395 aa).

The PNT domain maps to 69–155; the sequence is EPPAVLHLAE…AQLRDLTSSS (87 aa). The span at 200–240 shows a compositional bias: low complexity; the sequence is ASPYYGSSYGPGAPSPGSSDFSTSGTDTPQSSHSSDSGGSD. Positions 200 to 275 are disordered; it reads ASPYYGSSYG…HGKRKRGRPR (76 aa). Residues 246 to 265 show a composition bias toward basic and acidic residues; it reads TDSKVFPRDGFPDYKKGEPK. Basic residues predominate over residues 266 to 275; the sequence is HGKRKRGRPR. The segment at residues 297–379 is a DNA-binding region (ETS); that stretch reads THLWEFIRDI…DGRRLVYKFG (83 aa).

It belongs to the ETS family. Interacts with TBP. Interacts with CREBBP and EP300; these act as transcriptional coactivators of ELF3 and positively modulate its function. Interacts with XRCC5/KU86 and XRCC6/KU70; these inhibit the ability of ELF3 to bind DNA and negatively modulate its transcriptional activity. Associated with CLND7 and POU2F3. Interacts with ZNF768.

Its subcellular location is the cytoplasm. It localises to the nucleus. In terms of biological role, transcriptional activator that binds and transactivates ETS sequences containing the consensus nucleotide core sequence GGA[AT]. Acts synergistically with POU2F3 to transactivate the SPRR2A promoter and with RUNX1 to transactivate the ANGPT1 promoter. Also transactivates collagenase, CCL20, CLND7, FLG, KRT8, NOS2, PTGS2, SPRR2B, TGFBR2 and TGM3 promoters. Represses KRT4 promoter activity. Involved in mediating vascular inflammation. May play an important role in epithelial cell differentiation and tumorigenesis. May be a critical downstream effector of the ERBB2 signaling pathway. May be associated with mammary gland development and involution. Plays an important role in the regulation of transcription with TATA-less promoters in preimplantation embryos, which is essential in preimplantation development. The sequence is that of ETS-related transcription factor Elf-3 from Rattus norvegicus (Rat).